A 652-amino-acid polypeptide reads, in one-letter code: Acetyl-coenzyme A synthetase (652 aa).

CoA contacts are provided by residues 191-194 (RAGR), Thr-311, and Asn-335. ATP-binding positions include 387–389 (GEP), 411–416 (DTWWQT), Asp-500, and Arg-515. A CoA-binding site is contributed by Ser-523. Arg-526 contributes to the ATP binding site. Mg(2+) is bound by residues Val-537, His-539, and Ile-542. Arg-584 provides a ligand contact to CoA. Position 609 is an N6-acetyllysine (Lys-609).

This sequence belongs to the ATP-dependent AMP-binding enzyme family. The cofactor is Mg(2+). In terms of processing, acetylated. Deacetylation by the SIR2-homolog deacetylase activates the enzyme.

It catalyses the reaction acetate + ATP + CoA = acetyl-CoA + AMP + diphosphate. Functionally, catalyzes the conversion of acetate into acetyl-CoA (AcCoA), an essential intermediate at the junction of anabolic and catabolic pathways. Acs undergoes a two-step reaction. In the first half reaction, Acs combines acetate with ATP to form acetyl-adenylate (AcAMP) intermediate. In the second half reaction, it can then transfer the acetyl group from AcAMP to the sulfhydryl group of CoA, forming the product AcCoA. Enables the cell to use acetate during aerobic growth to generate energy via the TCA cycle, and biosynthetic compounds via the glyoxylate shunt. Acetylates CheY, the response regulator involved in flagellar movement and chemotaxis. The chain is Acetyl-coenzyme A synthetase from Sodalis glossinidius (strain morsitans).